The chain runs to 131 residues: C-type natriuretic peptide 1 (131 aa).

An N-terminal signal peptide occupies residues 1–22; that stretch reads MLYPALLCAALLLIAPLGHTEG. The propeptide occupies 23 to 109; sequence RTLHPSPDAI…KRAVMDRSRR (87 aa). Residues Cys115 and Cys131 are joined by a disulfide bond.

It belongs to the natriuretic peptide family. As to expression, expressed in brain and to a low extent in atrium.

Its subcellular location is the secreted. Its function is as follows. Exhibits natriuretic and vasodepressant activity. Has a cGMP-stimulating activity. The chain is C-type natriuretic peptide 1 from Oncorhynchus mykiss (Rainbow trout).